Here is a 344-residue protein sequence, read N- to C-terminus: Ferrochelatase (344 aa).

Residues His-214 and Glu-295 each contribute to the Fe cation site.

The protein belongs to the ferrochelatase family.

It is found in the cytoplasm. The enzyme catalyses heme b + 2 H(+) = protoporphyrin IX + Fe(2+). The protein operates within porphyrin-containing compound metabolism; protoheme biosynthesis; protoheme from protoporphyrin-IX: step 1/1. Catalyzes the ferrous insertion into protoporphyrin IX. The sequence is that of Ferrochelatase from Rhizobium etli (strain CIAT 652).